Consider the following 506-residue polypeptide: Glucan endo-1,3-beta-glucosidase 13 (506 aa).

A signal peptide spans 1 to 22; sequence MARDFKLIFSISILLLLLDCCY. Asparagine 70 carries N-linked (GlcNAc...) asparagine glycosylation. The active-site Proton donor is glutamate 119. 3 N-linked (GlcNAc...) asparagine glycosylation sites follow: asparagine 127, asparagine 175, and asparagine 212. Glutamate 264 (nucleophile) is an active-site residue. Asparagine 356 and asparagine 361 each carry an N-linked (GlcNAc...) asparagine glycan. A disulfide bond links cysteine 370 and cysteine 433. Residues asparagine 459 and asparagine 465 are each glycosylated (N-linked (GlcNAc...) asparagine). Serine 471 carries GPI-anchor amidated serine lipidation. Positions 472–506 are cleaved as a propeptide — removed in mature form; that stretch reads SASTPRGNELLQWILKLCLMISLFFSLQTMNSQAL.

This sequence belongs to the glycosyl hydrolase 17 family. In terms of processing, contains two additional disulfide bonds.

The protein localises to the secreted. Its subcellular location is the cell wall. It localises to the cell membrane. The enzyme catalyses Hydrolysis of (1-&gt;3)-beta-D-glucosidic linkages in (1-&gt;3)-beta-D-glucans.. In Arabidopsis thaliana (Mouse-ear cress), this protein is Glucan endo-1,3-beta-glucosidase 13.